Consider the following 197-residue polypeptide: Interleukin-17C (197 aa).

Residues 1–18 (MTLLPGLLFLTWLHTCLA) form the signal peptide. Cystine bridges form between Cys-129–Cys-189 and Cys-134–Cys-191.

It belongs to the IL-17 family. As to quaternary structure, binds to a heterodimer formed by IL17RA and IL17RE.

Its subcellular location is the secreted. In terms of biological role, cytokine that plays a crucial role in innate immunity of the epithelium, including to intestinal bacterial pathogens, in an autocrine manner. Stimulates the production of antibacterial peptides and pro-inflammatory molecules for host defense by signaling through the NF-kappa-B and MAPK pathways. Acts synergically with IL22 in inducing the expression of antibacterial peptides, including S100A8, S100A9, REG3A and REG3G. Synergy is also observed with TNF and IL1B in inducing DEFB2 from keratinocytes. Depending on the type of insult, may have both protective and pathogenic properties, either by maintaining epithelial homeostasis after an inflammatory challenge or by promoting inflammatory phenotype. Enhanced IL17C/IL17RE signaling may also lead to greater susceptibility to autoimmune diseases. This Homo sapiens (Human) protein is Interleukin-17C (IL17C).